We begin with the raw amino-acid sequence, 675 residues long: TOM1-like protein 9 (675 aa).

Residues Ala9–Pro138 form the VHS domain. Disordered regions lie at residues Ser144–Phe181, Leu270–Leu322, Phe371–Met524, Gln542–Pro561, and Arg622–Met675. Positions Glu180–Ser268 constitute a GAT domain. Composition is skewed to polar residues over residues Gly299–Leu317 and Ser372–Val435. Low complexity predominate over residues Ser436–Ser451. 2 stretches are compositionally biased toward polar residues: residues Gln470 to Pro481 and Pro488 to Met524. Residues Asn646 to Lys661 are compositionally biased toward basic and acidic residues.

This sequence belongs to the TOM1 family. As to quaternary structure, interacts with ELC/VPS23A and ELCL/VPS23B. Ubiquitously expressed.

It is found in the cytoplasm. It localises to the membrane. Functionally, might contribute to the loading of the ESCRT machinery. This is TOM1-like protein 9 from Arabidopsis thaliana (Mouse-ear cress).